Here is a 230-residue protein sequence, read N- to C-terminus: Acyl-protein thioesterase 1 (230 aa).

Catalysis depends on charge relay system residues Ser-119, Asp-174, and His-208. Lys-224 is subject to N6-acetyllysine.

This sequence belongs to the AB hydrolase superfamily. AB hydrolase 2 family. Homodimer. As to expression, ubiquitous. Detected at low levels in all tissues tested.

It is found in the cytoplasm. Its subcellular location is the cell membrane. The protein resides in the nucleus membrane. It localises to the endoplasmic reticulum. The enzyme catalyses S-hexadecanoyl-L-cysteinyl-[protein] + H2O = L-cysteinyl-[protein] + hexadecanoate + H(+). It carries out the reaction 1-hexadecanoyl-sn-glycero-3-phosphocholine + H2O = sn-glycerol 3-phosphocholine + hexadecanoate + H(+). The catalysed reaction is a 1-(9Z-octadecenoyl)-2-acyl-sn-glycero-3-phosphocholine + H2O = a 2-acyl-sn-glycero-3-phosphocholine + (9Z)-octadecenoate + H(+). Its function is as follows. Acts as an acyl-protein thioesterase. Hydrolyzes fatty acids from S-acylated cysteine residues in proteins such as trimeric G alpha proteins or HRAS. Acts as a palmitoyl thioesterase that catalyzes depalmitoylation of proteins, such as ADRB2, KCNMA1 and SQSTM1. Acts as a negative regulator of autophagy by mediating palmitoylation of SQSTM1, decreasing affinity between SQSTM1 and ATG8 proteins and recruitment of ubiquitinated cargo proteins to autophagosomes. Acts as a lysophospholipase and hydrolyzes lysophosphatidylcholine (lyso-PC). Also hydrolyzes lysophosphatidylethanolamine (lyso-PE), lysophosphatidylinositol (lyso-PI) and lysophosphatidylserine (lyso-PS). Has much higher thioesterase activity than lysophospholipase activity. Contributes to the production of lysophosphatidic acid (LPA) during blood coagulation by recognizing and cleaving plasma phospholipids to generate lysophospholipids which in turn act as substrates for ENPP2 to produce LPA. The sequence is that of Acyl-protein thioesterase 1 (Lypla1) from Rattus norvegicus (Rat).